The following is a 489-amino-acid chain: Glutamyl-tRNA(Gln) amidotransferase subunit A (489 aa).

Residues lysine 78 and serine 153 each act as charge relay system in the active site. The active-site Acyl-ester intermediate is the serine 177.

Belongs to the amidase family. GatA subfamily. In terms of assembly, heterotrimer of A, B and C subunits.

The enzyme catalyses L-glutamyl-tRNA(Gln) + L-glutamine + ATP + H2O = L-glutaminyl-tRNA(Gln) + L-glutamate + ADP + phosphate + H(+). Its function is as follows. Allows the formation of correctly charged Gln-tRNA(Gln) through the transamidation of misacylated Glu-tRNA(Gln) in organisms which lack glutaminyl-tRNA synthetase. The reaction takes place in the presence of glutamine and ATP through an activated gamma-phospho-Glu-tRNA(Gln). The protein is Glutamyl-tRNA(Gln) amidotransferase subunit A of Nitratidesulfovibrio vulgaris (strain DP4) (Desulfovibrio vulgaris).